The following is a 55-amino-acid chain: Spermatid nuclear transition protein 1 (55 aa).

The span at 1–42 shows a compositional bias: basic residues; that stretch reads MSTSRKLKSHGMRRGKNRAPHKGVKRGGSKRKYRKGSLKSRK. The interval 1–55 is disordered; that stretch reads MSTSRKLKSHGMRRGKNRAPHKGVKRGGSKRKYRKGSLKSRKRCDDANRNYRSHL. Residues Ser-9, Ser-37, and Ser-40 each carry the phosphoserine modification.

It belongs to the nuclear transition protein 1 family. As to expression, testis.

Its subcellular location is the nucleus. It localises to the chromosome. Functionally, plays a key role in the replacement of histones to protamine in the elongating spermatids of mammals. In condensing spermatids, loaded onto the nucleosomes, where it promotes the recruitment and processing of protamines, which are responsible for histone eviction. This Sus scrofa (Pig) protein is Spermatid nuclear transition protein 1 (TNP1).